The chain runs to 339 residues: UDP-N-acetylglucosamine--N-acetylmuramyl-(pentapeptide) pyrophosphoryl-undecaprenol N-acetylglucosamine transferase (339 aa).

UDP-N-acetyl-alpha-D-glucosamine is bound by residues 11 to 13, Asn127, Arg170, Ser188, Ile235, and Gln280; that span reads TGG.

The protein belongs to the glycosyltransferase 28 family. MurG subfamily.

It localises to the cell inner membrane. It carries out the reaction di-trans,octa-cis-undecaprenyl diphospho-N-acetyl-alpha-D-muramoyl-L-alanyl-D-glutamyl-meso-2,6-diaminopimeloyl-D-alanyl-D-alanine + UDP-N-acetyl-alpha-D-glucosamine = di-trans,octa-cis-undecaprenyl diphospho-[N-acetyl-alpha-D-glucosaminyl-(1-&gt;4)]-N-acetyl-alpha-D-muramoyl-L-alanyl-D-glutamyl-meso-2,6-diaminopimeloyl-D-alanyl-D-alanine + UDP + H(+). It participates in cell wall biogenesis; peptidoglycan biosynthesis. Functionally, cell wall formation. Catalyzes the transfer of a GlcNAc subunit on undecaprenyl-pyrophosphoryl-MurNAc-pentapeptide (lipid intermediate I) to form undecaprenyl-pyrophosphoryl-MurNAc-(pentapeptide)GlcNAc (lipid intermediate II). This Thermotoga petrophila (strain ATCC BAA-488 / DSM 13995 / JCM 10881 / RKU-1) protein is UDP-N-acetylglucosamine--N-acetylmuramyl-(pentapeptide) pyrophosphoryl-undecaprenol N-acetylglucosamine transferase.